The sequence spans 361 residues: tRNA 2-selenouridine synthase (361 aa).

The Rhodanese domain occupies 11-134 (ALLERPLIDV…MRQCVNAEIE (124 aa)). Cys-94 acts as the S-selanylcysteine intermediate in catalysis.

The protein belongs to the SelU family. Monomer.

The enzyme catalyses 5-methylaminomethyl-2-thiouridine(34) in tRNA + selenophosphate + (2E)-geranyl diphosphate + H2O + H(+) = 5-methylaminomethyl-2-selenouridine(34) in tRNA + (2E)-thiogeraniol + phosphate + diphosphate. It carries out the reaction 5-methylaminomethyl-2-thiouridine(34) in tRNA + (2E)-geranyl diphosphate = 5-methylaminomethyl-S-(2E)-geranyl-thiouridine(34) in tRNA + diphosphate. It catalyses the reaction 5-methylaminomethyl-S-(2E)-geranyl-thiouridine(34) in tRNA + selenophosphate + H(+) = 5-methylaminomethyl-2-(Se-phospho)selenouridine(34) in tRNA + (2E)-thiogeraniol. The catalysed reaction is 5-methylaminomethyl-2-(Se-phospho)selenouridine(34) in tRNA + H2O = 5-methylaminomethyl-2-selenouridine(34) in tRNA + phosphate. Involved in the post-transcriptional modification of the uridine at the wobble position (U34) of tRNA(Lys), tRNA(Glu) and tRNA(Gln). Catalyzes the conversion of 2-thiouridine (S2U-RNA) to 2-selenouridine (Se2U-RNA). Acts in a two-step process involving geranylation of 2-thiouridine (S2U) to S-geranyl-2-thiouridine (geS2U) and subsequent selenation of the latter derivative to 2-selenouridine (Se2U) in the tRNA chain. The polypeptide is tRNA 2-selenouridine synthase (Chromohalobacter salexigens (strain ATCC BAA-138 / DSM 3043 / CIP 106854 / NCIMB 13768 / 1H11)).